Consider the following 266-residue polypeptide: Cyclin-C (266 aa).

Residues 47 to 151 enclose the Cyclin N-terminal domain; the sequence is IIQVLGEQLK…LLENLDCCLI (105 aa).

It belongs to the cyclin family. Cyclin C subfamily. Component of the Cdk8 module of the Mediator complex.

The protein localises to the nucleus. In terms of biological role, component of the Mediator complex, a coactivator involved in regulated gene transcription of nearly all RNA polymerase II-dependent genes. Mediator functions as a bridge to convey information from gene-specific regulatory proteins to the basal RNA polymerase II transcription machinery. Mediator is recruited to promoters by direct interactions with regulatory proteins and serves as a scaffold for the assembly of a functional preinitiation complex with RNA polymerase II and the general transcription factors. Binds to and activates cyclin-dependent kinase Cdk8 that phosphorylates the CTD (C-terminal domain) of the large subunit of RNA polymerase II (RNAp II), which may inhibit the formation of a transcription initiation complex. This Anopheles gambiae (African malaria mosquito) protein is Cyclin-C (CycC).